An 81-amino-acid chain; its full sequence is Small ribosomal subunit protein uS17 (81 aa).

This sequence belongs to the universal ribosomal protein uS17 family. As to quaternary structure, part of the 30S ribosomal subunit.

In terms of biological role, one of the primary rRNA binding proteins, it binds specifically to the 5'-end of 16S ribosomal RNA. In Hyphomonas neptunium (strain ATCC 15444), this protein is Small ribosomal subunit protein uS17.